Here is a 499-residue protein sequence, read N- to C-terminus: Na(+)/H(+) antiporter NhaB (499 aa).

11 consecutive transmembrane segments (helical) span residues 33-53 (PVIFLISPYIAGWVLILEFIF), 66-86 (PGGLLAIEAVLIGMVSPHTVY), 89-109 (VSGNLEVILLLVFMVAGIYFM), 128-148 (AILSLLFSLVAAVLSAFLDAL), 237-257 (FIEFFVRMAPISIPVLIAGLI), 305-325 (AIVALILVVALALHLAEVGLI), 326-346 (GLTVIILATAFCGVIEEHQIG), 349-369 (FEEALPFTSLLVVFFAVVGVI), 393-413 (MFFIANGVLSMISDNVFVATV), 449-469 (ATPNGQAAFLFLLTSAIAPLI), and 477-497 (VWMALPYTLVMGGLGYVMIVI).

The protein belongs to the NhaB Na(+)/H(+) (TC 2.A.34) antiporter family.

Its subcellular location is the cell inner membrane. It carries out the reaction 2 Na(+)(in) + 3 H(+)(out) = 2 Na(+)(out) + 3 H(+)(in). In terms of biological role, na(+)/H(+) antiporter that extrudes sodium in exchange for external protons. The polypeptide is Na(+)/H(+) antiporter NhaB (Hahella chejuensis (strain KCTC 2396)).